The primary structure comprises 151 residues: MAAVTELPKMNQELAGAVREGLELKKVETTEKNVLPTKEDVAEEKQHVERIHEIEHFDSTKLHSTPVKEKIVLPSADDIKQEKQHLELTDKINNFPSENLKKTETIEKNVLPSPTDVAREKTLQMAASFDKSALHHVETIVSTDVRVTEAQ.

A run of 4 repeats spans residues 24-29 (LKKVET), 62-67 (LHSTPV), 100-105 (LKKTET), and 134-139 (LHHVET). The tract at residues 24 to 139 (LKKVETTEKN…DKSALHHVET (116 aa)) is 4 X 6 AA repeat of L-[KH]-[KSH]-[VT]-[EP]-[TV].

The protein belongs to the thymosin beta family. As to quaternary structure, interacts (via repeats 1, 2 and 4) with G-actin in a 1:3 ratio. Interacts (via repeats 2 and 3) with F-actin. As to expression, at the comma stage, enriched in the developing nerve ring (at protein level). Ubiquitously expressed in larvae and adults with enrichment in the spermatheca, the intestinal tract and the posterior bulb of the pharynx (at protein level). Expressed in oocytes and in the gonad (at protein level).

The protein resides in the cytoplasm. The protein localises to the cell cortex. It localises to the cell junction. Its subcellular location is the cytoskeleton. Its function is as follows. Plays an important role in the organization of the cytoskeleton by regulating actin polymerization in two ways. Firstly, by binding to and sequestering actin monomers (G actin) inhibits actin polymerization. Secondly, by binding directly filamentous actin (F actin) promotes actin polymerization. Regulates the formation of cortical actin in oocytes conferring them enough rigidity to sustain the contractions during ovulation. The polypeptide is Thymosin beta (Caenorhabditis elegans).